A 203-amino-acid chain; its full sequence is MARNLKSMMLCGFGLLCFLMIVDRAYAREFTVGGATGWTVPSGSQVYSQWAEQSRFQIGDSLLFVYQSNQDSVLQVTRDAYDSCNTDSPTAKFADGKTSVTLNHSGPYYFISGNKDNCKKNEKLVVIVMADRSGNKNTASSPPSPAPAPSGESAPSPPVSGTFEMTPAPTPTTSEDTPNSAASSLSFVAALLGAALASTLFLH.

A signal peptide spans 1–27 (MARNLKSMMLCGFGLLCFLMIVDRAYA). One can recognise a Phytocyanin domain in the interval 28-130 (REFTVGGATG…NEKLVVIVMA (103 aa)). C84 and C118 form a disulfide bridge. A glycan (N-linked (GlcNAc...) asparagine) is linked at N103. The tract at residues 134 to 181 (GNKNTASSPPSPAPAPSGESAPSPPVSGTFEMTPAPTPTTSEDTPNSA) is disordered. A lipid anchor (GPI-anchor amidated serine) is attached at S180. The propeptide at 181–203 (AASSLSFVAALLGAALASTLFLH) is removed in mature form.

It belongs to the early nodulin-like (ENODL) family. In terms of tissue distribution, specifically observed at the plasma membrane of sieve elements in vascular tissues of leaves, stems, roots, flowers and reproductive organs. Absent from companion cells.

It is found in the cell membrane. May act as a carbohydrate transporter. Mainly required for reproductive functions. The chain is Early nodulin-like protein 9 from Arabidopsis thaliana (Mouse-ear cress).